A 460-amino-acid polypeptide reads, in one-letter code: 3-isopropylmalate dehydratase large subunit (460 aa).

3 residues coordinate [4Fe-4S] cluster: cysteine 338, cysteine 398, and cysteine 401.

The protein belongs to the aconitase/IPM isomerase family. LeuC type 1 subfamily. Heterodimer of LeuC and LeuD. [4Fe-4S] cluster serves as cofactor.

The catalysed reaction is (2R,3S)-3-isopropylmalate = (2S)-2-isopropylmalate. It participates in amino-acid biosynthesis; L-leucine biosynthesis; L-leucine from 3-methyl-2-oxobutanoate: step 2/4. Functionally, catalyzes the isomerization between 2-isopropylmalate and 3-isopropylmalate, via the formation of 2-isopropylmaleate. This is 3-isopropylmalate dehydratase large subunit from Streptococcus gordonii (strain Challis / ATCC 35105 / BCRC 15272 / CH1 / DL1 / V288).